The following is a 245-amino-acid chain: 1-(5-phosphoribosyl)-5-[(5-phosphoribosylamino)methylideneamino] imidazole-4-carboxamide isomerase (245 aa).

Aspartate 8 (proton acceptor) is an active-site residue. Catalysis depends on aspartate 130, which acts as the Proton donor.

Belongs to the HisA/HisF family.

It localises to the cytoplasm. The enzyme catalyses 1-(5-phospho-beta-D-ribosyl)-5-[(5-phospho-beta-D-ribosylamino)methylideneamino]imidazole-4-carboxamide = 5-[(5-phospho-1-deoxy-D-ribulos-1-ylimino)methylamino]-1-(5-phospho-beta-D-ribosyl)imidazole-4-carboxamide. It functions in the pathway amino-acid biosynthesis; L-histidine biosynthesis; L-histidine from 5-phospho-alpha-D-ribose 1-diphosphate: step 4/9. This Pseudomonas savastanoi pv. phaseolicola (strain 1448A / Race 6) (Pseudomonas syringae pv. phaseolicola (strain 1448A / Race 6)) protein is 1-(5-phosphoribosyl)-5-[(5-phosphoribosylamino)methylideneamino] imidazole-4-carboxamide isomerase.